The chain runs to 428 residues: D-amino acid dehydrogenase (428 aa).

3–17 (VVILGSGVVGVASAY) is a binding site for FAD.

This sequence belongs to the DadA oxidoreductase family. The cofactor is FAD.

It catalyses the reaction a D-alpha-amino acid + A + H2O = a 2-oxocarboxylate + AH2 + NH4(+). It participates in amino-acid degradation; D-alanine degradation; NH(3) and pyruvate from D-alanine: step 1/1. Functionally, oxidative deamination of D-amino acids. The chain is D-amino acid dehydrogenase from Burkholderia mallei (strain NCTC 10247).